The following is a 138-amino-acid chain: Ribulose bisphosphate carboxylase small subunit (138 aa).

Belongs to the RuBisCO small chain family. Heterohexadecamer of 8 large and 8 small subunits.

It is found in the plastid. Its subcellular location is the chloroplast. RuBisCO catalyzes two reactions: the carboxylation of D-ribulose 1,5-bisphosphate, the primary event in carbon dioxide fixation, as well as the oxidative fragmentation of the pentose substrate in the photorespiration process. Both reactions occur simultaneously and in competition at the same active site. Although the small subunit is not catalytic it is essential for maximal activity. This chain is Ribulose bisphosphate carboxylase small subunit, found in Pyropia katadae (Red alga).